The sequence spans 304 residues: Ribosomal RNA small subunit methyltransferase H (304 aa).

Residues 36–38 (CGH), aspartate 55, phenylalanine 81, aspartate 102, and glutamine 109 contribute to the S-adenosyl-L-methionine site.

It belongs to the methyltransferase superfamily. RsmH family.

The protein localises to the cytoplasm. The enzyme catalyses cytidine(1402) in 16S rRNA + S-adenosyl-L-methionine = N(4)-methylcytidine(1402) in 16S rRNA + S-adenosyl-L-homocysteine + H(+). In terms of biological role, specifically methylates the N4 position of cytidine in position 1402 (C1402) of 16S rRNA. The sequence is that of Ribosomal RNA small subunit methyltransferase H from Onion yellows phytoplasma (strain OY-M).